The sequence spans 194 residues: Mersacidin decarboxylase (194 aa).

The active site involves histidine 75.

The protein belongs to the HFCD (homooligomeric flavin containing Cys decarboxylase) superfamily. Homododecamer. The cofactor is FAD.

Its pathway is antibiotic biosynthesis; mersacidin biosynthesis. Functionally, catalyzes the oxidative decarboxylation of the C-terminal cysteine residue of mersacidin to an aminoenethiol residue. This Bacillus sp. (strain HIL-Y85/54728) protein is Mersacidin decarboxylase (mrsD).